Reading from the N-terminus, the 226-residue chain is MDLTYFGHSTFQIETEDVTLLFDPFFEENPHTETDPGTLAPDVLLITHAHFDHFSDVEAVLEASDPLVISNFEITQYVQEEYGHDAIQPLNEGGSVEFDWGYVESTHARHSSSFPDGSYGGVPNGFVLELGDDVVYNTGDTAPFAEMKWVGDLWDVDVMLAPVGNVFTMGIYGALHSTEMVEPELVIPLHYDTFPPLETDLDAFEDAFDEAGYDTRVFGAGETAAL.

This sequence belongs to the UPF0173 family.

This Salinibacter ruber (strain DSM 13855 / M31) protein is UPF0173 metal-dependent hydrolase SRU_1937.